The chain runs to 334 residues: snRNA-activating protein complex subunit 2 (334 aa).

2 disordered regions span residues 137 to 200 and 271 to 306; these read LHSK…STEE and AGGS…ELKS. A compositionally biased stretch (low complexity) spans 167-180; the sequence is IPSSAPAAPSSAPR.

In terms of assembly, part of the SNAPc complex composed of 5 subunits: SNAPC1, SNAPC2, SNAPC3, SNAPC4 and SNAPC5. SNAPC2 interacts with TBP and SNAPC4.

It is found in the nucleus. Its function is as follows. Part of the SNAPc complex required for the transcription of both RNA polymerase II and III small-nuclear RNA genes. Binds to the proximal sequence element (PSE), a non-TATA-box basal promoter element common to these 2 types of genes. Recruits TBP and BRF2 to the U6 snRNA TATA box. The chain is snRNA-activating protein complex subunit 2 (SNAPC2) from Homo sapiens (Human).